Here is a 602-residue protein sequence, read N- to C-terminus: GTP-binding protein 2 (602 aa).

The segment at glycine 16 to glutamate 64 is disordered. Positions lysine 40–glycine 50 are enriched in basic residues. The 229-residue stretch at phenylalanine 170–serine 398 folds into the tr-type G domain. GTP-binding positions include glycine 179–serine 186, aspartate 260–histidine 264, and serine 316–aspartate 319.

This sequence belongs to the TRAFAC class translation factor GTPase superfamily. Classic translation factor GTPase family. GTPBP1 subfamily. Predominantly expressed in thymus, spleen, and testis. Expressed at lower levels in brain, lung, kidney, and ovary.

This is GTP-binding protein 2 from Homo sapiens (Human).